Reading from the N-terminus, the 348-residue chain is GMP reductase 2 (348 aa).

NADP(+)-binding positions include 26–27, K78, 129–131, and 180–181; these read SR, DVA, and IG. The K(+) site is built by G181, G183, and C186. The active-site Thioimidate intermediate is C186. Catalysis depends on T188, which acts as the Proton donor/acceptor. Residue R189 coordinates K(+). GMP contacts are provided by residues 219–221, 242–243, 268–270, and 286–290; these read DGG, GG, GMS, and RASEG. NADP(+) contacts are provided by residues M269 and 285–286; that span reads YR. K291 carries the post-translational modification N6-acetyllysine. NADP(+) is bound at residue 314 to 317; that stretch reads STCT.

It belongs to the IMPDH/GMPR family. GuaC type 1 subfamily. As to quaternary structure, homotetramer.

It carries out the reaction IMP + NH4(+) + NADP(+) = GMP + NADPH + 2 H(+). Catalyzes the irreversible NADPH-dependent deamination of GMP to IMP. It functions in the conversion of nucleobase, nucleoside and nucleotide derivatives of G to A nucleotides, and in maintaining the intracellular balance of A and G nucleotides. Plays a role in modulating cellular differentiation. This chain is GMP reductase 2, found in Bos taurus (Bovine).